Consider the following 314-residue polypeptide: GTPase Era (314 aa).

Positions 21-189 constitute an Era-type G domain; the sequence is KSGFVGIIGR…QNTLIEQLEP (169 aa). Residues 29-36 are G1; the sequence is GRPNVGKS. 29–36 contacts GTP; it reads GRPNVGKS. Residues 55 to 59 are G2; it reads QTTRN. Residues 76 to 79 are G3; that stretch reads DTPG. GTP is bound by residues 76 to 80 and 138 to 141; these read DTPGI and NKSD. Positions 138–141 are G4; it reads NKSD. The segment at 168–170 is G5; the sequence is FSA. The 85-residue stretch at 212 to 296 folds into the KH type-2 domain; the sequence is IREQILQLTR…FLKLFVKVEP (85 aa).

Belongs to the TRAFAC class TrmE-Era-EngA-EngB-Septin-like GTPase superfamily. Era GTPase family. In terms of assembly, monomer.

Its subcellular location is the cytoplasm. The protein localises to the cell inner membrane. An essential GTPase that binds both GDP and GTP, with rapid nucleotide exchange. Plays a role in 16S rRNA processing and 30S ribosomal subunit biogenesis and possibly also in cell cycle regulation and energy metabolism. In Crocosphaera subtropica (strain ATCC 51142 / BH68) (Cyanothece sp. (strain ATCC 51142)), this protein is GTPase Era.